A 642-amino-acid chain; its full sequence is ATP-dependent zinc metalloprotease FtsH (642 aa).

Over 1-6 (MGRFTK) the chain is Cytoplasmic. Residues 7–27 (NIVLYLLIIAAFVIAIDAFSG) form a helical membrane-spanning segment. Residues 28–101 (QSANKSELSY…TAAPPEQPAW (74 aa)) are Extracellular-facing. A helical membrane pass occupies residues 102–122 (WMSLLGSAIPIIILVVLFFFI). At 123 to 642 (MQQTQGGGGR…LSEASSNEIK (520 aa)) the chain is on the cytoplasmic side. Position 194–201 (194–201 (GPPGTGKT)) interacts with ATP. A Zn(2+)-binding site is contributed by His416. Residue Glu417 is part of the active site. Zn(2+) contacts are provided by His420 and Asp492. Over residues 597-610 (TTKEPEAEEPKVAS) the composition is skewed to basic and acidic residues. The interval 597-642 (TTKEPEAEEPKVASEADSSIVPEGVDAKKTTSTVADLSEASSNEIK) is disordered. Positions 626-642 (TTSTVADLSEASSNEIK) are enriched in polar residues.

This sequence in the central section; belongs to the AAA ATPase family. It in the C-terminal section; belongs to the peptidase M41 family. Homohexamer. The cofactor is Zn(2+).

The protein resides in the cell membrane. Functionally, acts as a processive, ATP-dependent zinc metallopeptidase for both cytoplasmic and membrane proteins. Plays a role in the quality control of integral membrane proteins. This Veillonella parvula (strain ATCC 10790 / DSM 2008 / CCUG 5123 / JCM 12972 / NCTC 11810 / Te3) (Veillonella alcalescens) protein is ATP-dependent zinc metalloprotease FtsH.